Reading from the N-terminus, the 256-residue chain is Putative adhesin P1-like protein MPN_132 (256 aa).

The span at 56 to 72 (AVSESQAATSSTTTTAT) shows a compositional bias: low complexity. 2 disordered regions span residues 56–115 (AVSE…PYLH) and 149–235 (FGTD…EVVG). Residues 96 to 112 (KASTQGSGQTNSQNTSP) are compositionally biased toward polar residues. Composition is skewed to low complexity over residues 155 to 179 (TQPQPQPLKTTTPVFGTNSGNLGSV) and 211 to 222 (STSDGNTSSTNN).

Belongs to the adhesin P1 family.

The sequence is that of Putative adhesin P1-like protein MPN_132 from Mycoplasma pneumoniae (strain ATCC 29342 / M129 / Subtype 1) (Mycoplasmoides pneumoniae).